A 686-amino-acid polypeptide reads, in one-letter code: DNA ligase 1 (686 aa).

NAD(+) contacts are provided by residues 35-39 (DFEYD), 84-85 (SL), and E119. K121 functions as the N6-AMP-lysine intermediate in the catalytic mechanism. Positions 142, 177, 293, and 317 each coordinate NAD(+). 4 residues coordinate Zn(2+): C411, C414, C429, and C434. The BRCT domain maps to 602 to 686 (RVGEQLAGLT…LAEKGAPPLP (85 aa)).

It belongs to the NAD-dependent DNA ligase family. LigA subfamily. Mg(2+) serves as cofactor. Requires Mn(2+) as cofactor.

It carries out the reaction NAD(+) + (deoxyribonucleotide)n-3'-hydroxyl + 5'-phospho-(deoxyribonucleotide)m = (deoxyribonucleotide)n+m + AMP + beta-nicotinamide D-nucleotide.. Its function is as follows. DNA ligase that catalyzes the formation of phosphodiester linkages between 5'-phosphoryl and 3'-hydroxyl groups in double-stranded DNA using NAD as a coenzyme and as the energy source for the reaction. It is essential for DNA replication and repair of damaged DNA. The chain is DNA ligase 1 from Deinococcus deserti (strain DSM 17065 / CIP 109153 / LMG 22923 / VCD115).